The primary structure comprises 470 residues: Cyclic AMP receptor-like protein D (470 aa).

The Extracellular portion of the chain corresponds to 1 to 16 (MSSCSSLSMDDRVKIG). A helical transmembrane segment spans residues 17–37 (YGSIAGASLSIIGSIGTIILI). Topologically, residues 38–123 (KIRNKKQEKK…NNNQKTKVSH (86 aa)) are cytoplasmic. Residues 124 to 144 (FIINLSIANLLASIFMITIKL) form a helical membrane-spanning segment. Residues 145 to 176 (MMIHFNDKFIKVLPSTANHSFNALISVCTIGN) are Extracellular-facing. A glycan (N-linked (GlcNAc...) asparagine) is linked at N162. A disulfide bridge connects residues C172 and C287. Residues 177-197 (GVIGFSFISTFFWTLAISMYI) traverse the membrane as a helical segment. Residues 198–253 (YQQFLSSSTINSNNNNNNINNINNNNNNNINNINNSKNNNSINNFNNSNKSNKIIK) lie on the Cytoplasmic side of the membrane. A helical membrane pass occupies residues 254-274 (MLFYFVCWVIPFVLGSILVSG). Residues 275–295 (SRLIELNSDLPWCSIDSNIQL) are Extracellular-facing. Residues 296–316 (ISFYFPLIICLLATTFFTILI) form a helical membrane-spanning segment. Residues 317–342 (KYKFSNDKLACSSSSLINLQSKIIQR) lie on the Cytoplasmic side of the membrane. The chain crosses the membrane as a helical span at residues 343–363 (LILFLIVILVCWVPSLISFFI). Residues 364–372 (SFFSKNCKQ) are Extracellular-facing. Residues 373–393 (FLWLEIISSTIQSCQGILNFL) traverse the membrane as a helical segment. The Cytoplasmic portion of the chain corresponds to 394 to 470 (SYLSIFKKLK…DFDNNQIQEK (77 aa)).

This sequence belongs to the G-protein coupled receptor 5 family.

It localises to the membrane. Functionally, receptor for cAMP. The protein is Cyclic AMP receptor-like protein D (crlD) of Dictyostelium discoideum (Social amoeba).